Here is a 1166-residue protein sequence, read N- to C-terminus: ATP-dependent helicase/deoxyribonuclease subunit B (1166 aa).

Positions 1–390 constitute a UvrD-like helicase ATP-binding domain; sequence MGVEFLVGRS…HPLIEFIRSS (390 aa). Residue 8 to 15 participates in ATP binding; the sequence is GRSGSGKT. Residues 281-586 form the UvrD-like helicase C-terminal domain; the sequence is TKRHQHAPEL…HFSLIPPALD (306 aa). The [4Fe-4S] cluster site is built by cysteine 801, cysteine 1121, cysteine 1124, and cysteine 1130.

It belongs to the helicase family. AddB/RexB type 1 subfamily. As to quaternary structure, heterodimer of AddA and AddB. The cofactor is Mg(2+). [4Fe-4S] cluster serves as cofactor.

Its function is as follows. The heterodimer acts as both an ATP-dependent DNA helicase and an ATP-dependent, dual-direction single-stranded exonuclease. Recognizes the chi site generating a DNA molecule suitable for the initiation of homologous recombination. The AddB subunit has 5' -&gt; 3' nuclease activity but not helicase activity. The sequence is that of ATP-dependent helicase/deoxyribonuclease subunit B from Bacillus velezensis (strain DSM 23117 / BGSC 10A6 / LMG 26770 / FZB42) (Bacillus amyloliquefaciens subsp. plantarum).